The sequence spans 289 residues: tRNA(Ile)-lysidine synthase (289 aa).

11–16 (SGGPDS) is a binding site for ATP.

The protein belongs to the tRNA(Ile)-lysidine synthase family.

It localises to the cytoplasm. The catalysed reaction is cytidine(34) in tRNA(Ile2) + L-lysine + ATP = lysidine(34) in tRNA(Ile2) + AMP + diphosphate + H(+). Its function is as follows. Ligates lysine onto the cytidine present at position 34 of the AUA codon-specific tRNA(Ile) that contains the anticodon CAU, in an ATP-dependent manner. Cytidine is converted to lysidine, thus changing the amino acid specificity of the tRNA from methionine to isoleucine. The chain is tRNA(Ile)-lysidine synthase from Mycoplasma pneumoniae (strain ATCC 29342 / M129 / Subtype 1) (Mycoplasmoides pneumoniae).